A 557-amino-acid chain; its full sequence is Aerobic glycerol-3-phosphate dehydrogenase (557 aa).

Residue 21–49 participates in FAD binding; the sequence is DVVIIGGGITGAGIALDASERGMKVALVE.

It belongs to the FAD-dependent glycerol-3-phosphate dehydrogenase family. FAD serves as cofactor.

The protein resides in the cytoplasm. It carries out the reaction a quinone + sn-glycerol 3-phosphate = dihydroxyacetone phosphate + a quinol. The protein operates within polyol metabolism; glycerol degradation via glycerol kinase pathway; glycerone phosphate from sn-glycerol 3-phosphate (aerobic route): step 1/1. This Staphylococcus saprophyticus subsp. saprophyticus (strain ATCC 15305 / DSM 20229 / NCIMB 8711 / NCTC 7292 / S-41) protein is Aerobic glycerol-3-phosphate dehydrogenase (glpD).